We begin with the raw amino-acid sequence, 159 residues long: Ribosomal RNA large subunit methyltransferase H (159 aa).

S-adenosyl-L-methionine-binding positions include Leu76, Gly107, and 126–131 (LSKLTM).

This sequence belongs to the RNA methyltransferase RlmH family. Homodimer.

It localises to the cytoplasm. It catalyses the reaction pseudouridine(1915) in 23S rRNA + S-adenosyl-L-methionine = N(3)-methylpseudouridine(1915) in 23S rRNA + S-adenosyl-L-homocysteine + H(+). Specifically methylates the pseudouridine at position 1915 (m3Psi1915) in 23S rRNA. This Acinetobacter baumannii (strain AB307-0294) protein is Ribosomal RNA large subunit methyltransferase H.